The following is a 189-amino-acid chain: Peroxiredoxin sll1621 (189 aa).

The 176-residue stretch at Thr-2 to Ala-177 folds into the Thioredoxin domain. The active-site Cysteine sulfenic acid (-SOH) intermediate (for peroxiredoxin activity) is Cys-55.

This sequence belongs to the peroxiredoxin family. Prx5 subfamily. Monomer.

It carries out the reaction a hydroperoxide + 2 glutathione = an alcohol + glutathione disulfide + H2O. Its function is as follows. Thiol-specific peroxidase that catalyzes the reduction of hydrogen peroxide and organic hydroperoxides to water and alcohols, respectively. Plays a role in cell protection against oxidative stress by detoxifying peroxides. This is Peroxiredoxin sll1621 from Synechocystis sp. (strain ATCC 27184 / PCC 6803 / Kazusa).